We begin with the raw amino-acid sequence, 301 residues long: UDP-N-acetylenolpyruvoylglucosamine reductase (301 aa).

Positions 30–194 constitute an FAD-binding PCMH-type domain; sequence VGGEADYLVF…LSVKFALAPG (165 aa). Arginine 173 is a catalytic residue. Residue serine 223 is the Proton donor of the active site. Glutamate 293 is an active-site residue.

Belongs to the MurB family. The cofactor is FAD.

The protein localises to the cytoplasm. The enzyme catalyses UDP-N-acetyl-alpha-D-muramate + NADP(+) = UDP-N-acetyl-3-O-(1-carboxyvinyl)-alpha-D-glucosamine + NADPH + H(+). Its pathway is cell wall biogenesis; peptidoglycan biosynthesis. Functionally, cell wall formation. The chain is UDP-N-acetylenolpyruvoylglucosamine reductase from Streptococcus pneumoniae (strain JJA).